Reading from the N-terminus, the 298-residue chain is Chromatin modification-related protein YNG2 (298 aa).

Positions 20-86 form a coiled coil; it reads EVRHLLEEIK…KLVQKLQKEK (67 aa). The segment covering 140-158 has biased composition (polar residues); the sequence is GFSDSASATPTPRNGSSAT. Positions 140–206 are disordered; it reads GFSDSASATP…EEIEDPLPYE (67 aa). A compositionally biased stretch (low complexity) spans 174 to 188; that stretch reads VKGASSSSAQSSSAS. Residues 237–288 form a PHD-type zinc finger; it reads NLYCFCQRVSFGEMIGCDNEDCKYEWFHWSCVGITSPPKDDEIWYCPDCASK. Zn(2+)-binding residues include Cys-240, Cys-242, Cys-253, Cys-258, His-264, Cys-267, Cys-282, and Cys-285.

The protein belongs to the ING family. Interacts with H3K4me3 and to a lesser extent with H3K4me2. Component of the NuA4 histone acetyltransferase complex.

Its subcellular location is the nucleus. Its function is as follows. Component of the NuA4 histone acetyltransferase complex which is involved in transcriptional activation of selected genes principally by acetylation of nucleosomal histone H4 and H2A. The NuA4 complex is also involved in DNA repair. Involved in cell cycle progression and meiosis. This chain is Chromatin modification-related protein YNG2 (YNG2), found in Candida albicans (strain SC5314 / ATCC MYA-2876) (Yeast).